Reading from the N-terminus, the 510-residue chain is MDIRAAEISAILKDQIKNFGQEAEVTEVGQVLSVGDGIARVYGLDNVQAGEMVEFENGTRGMALNLETDNVGVVIFGADREIKEGQTVKRTRSIVDTPVGKGLLGRVVDALGNPIDGKGPIQATERKRVDVKAPGIIPRKSVNEPMATGLKAIDALIPVGRGQRELIIGDRQTGKTAIALDTILNQKPLNVEGAPEGQKLYCVYVAVGQKRSTVAQFVKVLEEQGALEYSIVVAATASDPAPMQYIAPFTGCTMGEYFRDNGMHAVIIYDDLSKQAVAYRQMSLLLRRPPGREAYPGDVFYLHSRLLERAAKLNDDHGAGSLTALPVIETQANDVSAYIPTNVISITDGQIFLETDLFFQGIRPAVNVGLSVSRVGSSAQTKAMKKVAGKIKGELAQYREMAAFAQFGSDLDASTQRLLNRGARLTELLKQPQFSPLKMEEQVVVIYAGVNGYLDALPVAKVRAFEDGLLSLLRGKEVGILDAIRTSRDLSDDTAAKLKAVVESYAKTFA.

169–176 is an ATP binding site; the sequence is GDRQTGKT.

The protein belongs to the ATPase alpha/beta chains family. As to quaternary structure, F-type ATPases have 2 components, CF(1) - the catalytic core - and CF(0) - the membrane proton channel. CF(1) has five subunits: alpha(3), beta(3), gamma(1), delta(1), epsilon(1). CF(0) has four main subunits: a(1), b(1), b'(1) and c(9-12).

The protein resides in the cell inner membrane. It catalyses the reaction ATP + H2O + 4 H(+)(in) = ADP + phosphate + 5 H(+)(out). Produces ATP from ADP in the presence of a proton gradient across the membrane. The alpha chain is a regulatory subunit. In Rhodopseudomonas palustris (strain HaA2), this protein is ATP synthase subunit alpha.